The chain runs to 648 residues: 1-deoxy-D-xylulose-5-phosphate synthase (648 aa).

Thiamine diphosphate contacts are provided by residues H73 and 114–116; that span reads SHA. A Mg(2+)-binding site is contributed by D145. Residues 146-147, N175, Y286, and E367 contribute to the thiamine diphosphate site; that span reads GA. Residue N175 coordinates Mg(2+).

It belongs to the transketolase family. DXPS subfamily. In terms of assembly, homodimer. Mg(2+) is required as a cofactor. Thiamine diphosphate serves as cofactor.

It catalyses the reaction D-glyceraldehyde 3-phosphate + pyruvate + H(+) = 1-deoxy-D-xylulose 5-phosphate + CO2. It participates in metabolic intermediate biosynthesis; 1-deoxy-D-xylulose 5-phosphate biosynthesis; 1-deoxy-D-xylulose 5-phosphate from D-glyceraldehyde 3-phosphate and pyruvate: step 1/1. Catalyzes the acyloin condensation reaction between C atoms 2 and 3 of pyruvate and glyceraldehyde 3-phosphate to yield 1-deoxy-D-xylulose-5-phosphate (DXP). The chain is 1-deoxy-D-xylulose-5-phosphate synthase from Rhodococcus erythropolis (strain PR4 / NBRC 100887).